The chain runs to 359 residues: CMP-N-acetylneuraminate-poly-alpha-2,8-sialyltransferase (359 aa).

Residues 1-7 lie on the Cytoplasmic side of the membrane; it reads MRSIRKR. The chain crosses the membrane as a helical; Signal-anchor for type II membrane protein span at residues 8 to 20; it reads WTICTISLLLIFY. Over 21 to 359 the chain is Lumenal; it reads KTKEMARTEE…KLTTGKCIKQ (339 aa). 3 N-linked (GlcNAc...) asparagine glycosylation sites follow: Asn-50, Asn-74, and Asn-119. 2 disulfides stabilise this stretch: Cys-142-Cys-292 and Cys-156-Cys-356. Asn-147 and Asn-170 together coordinate CMP-N-acetyl-beta-neuraminate. Asn-204 and Asn-219 each carry an N-linked (GlcNAc...) asparagine glycan. 4 residues coordinate CMP-N-acetyl-beta-neuraminate: Ser-279, Thr-280, Gly-281, and Trp-301. The active-site Proton donor/acceptor is the His-331.

The protein belongs to the glycosyltransferase 29 family. Autopolysialylated.

The protein localises to the golgi apparatus membrane. It is found in the secreted. It catalyses the reaction [N-acetyl-alpha-D-neuraminosyl-(2-&gt;8)](n) + CMP-N-acetyl-beta-neuraminate = [N-acetyl-alpha-D-neuraminosyl-(2-&gt;8)](n+1) + CMP + H(+). In terms of biological role, catalyzes the transfer of a sialic acid from a CMP-linked sialic acid donor onto a terminal alpha-2,3-, alpha-2,6-, or alpha-2,8-linked sialic acid of an N-linked glycan protein acceptor through alpha-2,8-linkages. Therefore, participates in polysialic acid synthesis on various sialylated N-acetyllactosaminyl oligosaccharides, including NCAM1 N-glycans, FETUB N-glycans and AHSG. It is noteworthy that alpha-2,3-linked sialic acid is apparently a better acceptor than alpha-2,6-linked sialic acid. In Bos taurus (Bovine), this protein is CMP-N-acetylneuraminate-poly-alpha-2,8-sialyltransferase (ST8SIA4).